The following is a 289-amino-acid chain: Cysteine-rich venom protein Mr30 (289 aa).

A signal peptide spans 1–24 (MLSTMQTVGAILMLSIVFVAGTKR). 4-carboxyglutamate is present on Glu33. The SCP domain occupies 62–184 (VRMHNVIRAT…GEDRYFVCNY (123 aa)).

It belongs to the CRISP family. Contains 11 disulfide bonds. In terms of tissue distribution, expressed by the venom duct.

The protein resides in the secreted. In terms of biological role, has no proteolytic activity. The polypeptide is Cysteine-rich venom protein Mr30 (Conus marmoreus (Marble cone)).